Consider the following 221-residue polypeptide: MSNKILTLKNVSKHYRQGNSIIRVLDDLNLNINEGELIAIIGSSGSGKSTLLHIAGLLDKPTNGEVIIANNEYKTNHLIRLNYLGFIYQQHHLLKDFTAIENVIMPRLINGSNQKEAIEAAKSILDSLGLGKKLHNMPGELSGGEQQRVAIARSLINKPKIILADEPTGNLDPKTTNEVFNLFLKVAKEQNTAIVMVTHNHELAHRMDKLYKLKHGALNMS.

One can recognise an ABC transporter domain in the interval 6 to 220 (LTLKNVSKHY…YKLKHGALNM (215 aa)). 42–49 (GSSGSGKS) lines the ATP pocket.

This sequence belongs to the ABC transporter superfamily. Lipoprotein translocase (TC 3.A.1.125) family. In terms of assembly, the complex is composed of two ATP-binding proteins (LolD) and two transmembrane proteins (LolC and LolE).

The protein localises to the cell inner membrane. Functionally, part of the ABC transporter complex LolCDE involved in the translocation of mature outer membrane-directed lipoproteins, from the inner membrane to the periplasmic chaperone, LolA. Responsible for the formation of the LolA-lipoprotein complex in an ATP-dependent manner. The chain is Lipoprotein-releasing system ATP-binding protein LolD from Rickettsia bellii (strain RML369-C).